A 167-amino-acid chain; its full sequence is Small ribosomal subunit protein uS5 (167 aa).

The S5 DRBM domain maps to 12–75; the sequence is LQEKLIAVNR…EKARRNMVTI (64 aa).

It belongs to the universal ribosomal protein uS5 family. As to quaternary structure, part of the 30S ribosomal subunit. Contacts proteins S4 and S8.

Its function is as follows. With S4 and S12 plays an important role in translational accuracy. Functionally, located at the back of the 30S subunit body where it stabilizes the conformation of the head with respect to the body. This chain is Small ribosomal subunit protein uS5, found in Vibrio vulnificus (strain CMCP6).